The chain runs to 77 residues: Translation initiation factor IF-1, chloroplastic (77 aa).

An S1-like domain is found at 1–71 (MKEQKWVHEG…TRGRIIYRLR (71 aa)).

It belongs to the IF-1 family. As to quaternary structure, component of the 30S ribosomal translation pre-initiation complex which assembles on the 30S ribosome in the order IF-2 and IF-3, IF-1 and N-formylmethionyl-tRNA(fMet); mRNA recruitment can occur at any time during PIC assembly.

It localises to the plastid. The protein resides in the chloroplast. Functionally, one of the essential components for the initiation of protein synthesis. Stabilizes the binding of IF-2 and IF-3 on the 30S subunit to which N-formylmethionyl-tRNA(fMet) subsequently binds. Helps modulate mRNA selection, yielding the 30S pre-initiation complex (PIC). Upon addition of the 50S ribosomal subunit IF-1, IF-2 and IF-3 are released leaving the mature 70S translation initiation complex. This chain is Translation initiation factor IF-1, chloroplastic, found in Cercidiphyllum japonicum (Katsura tree).